Reading from the N-terminus, the 178-residue chain is Co-chaperone protein p23-1 (178 aa).

The region spanning 2–91 (SRHPTVKWAQ…AESKWWNRLT (90 aa)) is the CS domain. 2 stretches are compositionally biased toward acidic residues: residues 112–126 (DDED…DFGD) and 136–155 (DTDE…EGET). Residues 112 to 178 (DDEDKGGEGD…DEEGVNAKKD (67 aa)) are disordered. Positions 157–178 (AETKEKKIDGEKDEEGVNAKKD) are enriched in basic and acidic residues.

The protein belongs to the p23/wos2 family. In terms of assembly, interacts with HSP90 in an ATP-dependent manner.

Functionally, acts as a co-chaperone for HSP90. This is Co-chaperone protein p23-1 from Brassica napus (Rape).